A 373-amino-acid chain; its full sequence is Alanine racemase (373 aa).

Lys-37 (proton acceptor; specific for D-alanine) is an active-site residue. Residue Lys-37 is modified to N6-(pyridoxal phosphate)lysine. A substrate-binding site is contributed by Arg-135. The Proton acceptor; specific for L-alanine role is filled by Tyr-266. Met-313 contributes to the substrate binding site.

The protein belongs to the alanine racemase family. Requires pyridoxal 5'-phosphate as cofactor.

It catalyses the reaction L-alanine = D-alanine. Its pathway is amino-acid biosynthesis; D-alanine biosynthesis; D-alanine from L-alanine: step 1/1. Its function is as follows. Catalyzes the interconversion of L-alanine and D-alanine. This organism is able to use both L- and D-alanine as a nitrogen source. May also prevent D-alanine from interfering with the use of L-alanine. This is Alanine racemase (alr) from Methanococcus maripaludis (strain DSM 14266 / JCM 13030 / NBRC 101832 / S2 / LL).